Here is a 326-residue protein sequence, read N- to C-terminus: Putative HTH-type transcriptional regulatory protein MMP0678 (326 aa).

One can recognise an HTH cro/C1-type domain in the interval 128-183 (LRETREKLKISVGELAEVSRVSRKTIYKYEQNEANPSAEVAIKIEEYLDVPLIKGI). The H-T-H motif DNA-binding region spans 139–158 (VGELAEVSRVSRKTIYKYEQ).

This chain is Putative HTH-type transcriptional regulatory protein MMP0678, found in Methanococcus maripaludis (strain DSM 14266 / JCM 13030 / NBRC 101832 / S2 / LL).